Reading from the N-terminus, the 149-residue chain is Large ribosomal subunit protein uL11 (149 aa).

The protein belongs to the universal ribosomal protein uL11 family. In terms of assembly, part of the ribosomal stalk of the 50S ribosomal subunit. Interacts with L10 and the large rRNA to form the base of the stalk. L10 forms an elongated spine to which L12 dimers bind in a sequential fashion forming a multimeric L10(L12)X complex. One or more lysine residues are methylated.

Functionally, forms part of the ribosomal stalk which helps the ribosome interact with GTP-bound translation factors. The chain is Large ribosomal subunit protein uL11 from Xanthobacter autotrophicus (strain ATCC BAA-1158 / Py2).